The sequence spans 649 residues: 1-deoxy-D-xylulose-5-phosphate synthase 1 (649 aa).

Thiamine diphosphate-binding positions include His79 and 120-122; that span reads AHS. Asp151 provides a ligand contact to Mg(2+). Thiamine diphosphate-binding positions include 152-153, Asn180, Tyr289, and Glu371; that span reads GS. Residue Asn180 coordinates Mg(2+).

The protein belongs to the transketolase family. DXPS subfamily. As to quaternary structure, homodimer. Mg(2+) is required as a cofactor. It depends on thiamine diphosphate as a cofactor.

It carries out the reaction D-glyceraldehyde 3-phosphate + pyruvate + H(+) = 1-deoxy-D-xylulose 5-phosphate + CO2. Its pathway is metabolic intermediate biosynthesis; 1-deoxy-D-xylulose 5-phosphate biosynthesis; 1-deoxy-D-xylulose 5-phosphate from D-glyceraldehyde 3-phosphate and pyruvate: step 1/1. Functionally, catalyzes the acyloin condensation reaction between C atoms 2 and 3 of pyruvate and glyceraldehyde 3-phosphate to yield 1-deoxy-D-xylulose-5-phosphate (DXP). The sequence is that of 1-deoxy-D-xylulose-5-phosphate synthase 1 from Zymomonas mobilis subsp. mobilis (strain ATCC 31821 / ZM4 / CP4).